We begin with the raw amino-acid sequence, 315 residues long: Tetraacyldisaccharide 4'-kinase (315 aa).

ATP is bound at residue Ser45–Thr52.

This sequence belongs to the LpxK family.

The enzyme catalyses a lipid A disaccharide + ATP = a lipid IVA + ADP + H(+). Its pathway is glycolipid biosynthesis; lipid IV(A) biosynthesis; lipid IV(A) from (3R)-3-hydroxytetradecanoyl-[acyl-carrier-protein] and UDP-N-acetyl-alpha-D-glucosamine: step 6/6. In terms of biological role, transfers the gamma-phosphate of ATP to the 4'-position of a tetraacyldisaccharide 1-phosphate intermediate (termed DS-1-P) to form tetraacyldisaccharide 1,4'-bis-phosphate (lipid IVA). This chain is Tetraacyldisaccharide 4'-kinase, found in Aquifex aeolicus (strain VF5).